The chain runs to 123 residues: MLKEFQKFIMRGNVLDLAVGVIIGSAFTGLVTSLTKNLINPILSMFAGKADLSGLYFTILGAKFTYGNFINDVLNFLIIAFVVFLLVKGINRILPSKPAKPAGPTQEELLTEIRDLLKQDQQV.

2 helical membrane passes run 14-34 (VLDLAVGVIIGSAFTGLVTSL) and 67-87 (GNFINDVLNFLIIAFVVFLLV).

It belongs to the MscL family. In terms of assembly, homopentamer.

It localises to the cell membrane. Channel that opens in response to stretch forces in the membrane lipid bilayer. May participate in the regulation of osmotic pressure changes within the cell. The polypeptide is Large-conductance mechanosensitive channel (Lacticaseibacillus casei (strain BL23) (Lactobacillus casei)).